The following is a 432-amino-acid chain: UPF0761 membrane protein Cag_0935 (432 aa).

A run of 6 helical transmembrane segments spans residues 52–72, 108–128, 148–168, 190–210, 220–240, and 254–274; these read LLSI…FEVF, NIPL…LSTV, FTLY…SLAA, LLAL…YMLV, AFAG…WFLF, and ALSV…VVLV.

This sequence belongs to the UPF0761 family.

The protein resides in the cell inner membrane. The protein is UPF0761 membrane protein Cag_0935 of Chlorobium chlorochromatii (strain CaD3).